Here is a 296-residue protein sequence, read N- to C-terminus: Tyrosine recombinase XerC (296 aa).

The region spanning 1–84 (MEKIQQAYLY…TLRSFYEYWM (84 aa)) is the Core-binding (CB) domain. Residues 105–286 (YLPHFFYEEE…TNEQLRKVYL (182 aa)) form the Tyr recombinase domain. Catalysis depends on residues arginine 145, lysine 169, histidine 238, arginine 241, and histidine 264. The active-site O-(3'-phospho-DNA)-tyrosine intermediate is tyrosine 273.

It belongs to the 'phage' integrase family. XerC subfamily. As to quaternary structure, forms a cyclic heterotetrameric complex composed of two molecules of XerC and two molecules of XerD.

Its subcellular location is the cytoplasm. Its function is as follows. Site-specific tyrosine recombinase, which acts by catalyzing the cutting and rejoining of the recombining DNA molecules. The XerC-XerD complex is essential to convert dimers of the bacterial chromosome into monomers to permit their segregation at cell division. It also contributes to the segregational stability of plasmids. In Staphylococcus saprophyticus subsp. saprophyticus (strain ATCC 15305 / DSM 20229 / NCIMB 8711 / NCTC 7292 / S-41), this protein is Tyrosine recombinase XerC.